Consider the following 460-residue polypeptide: MLKIYNTLTRQKEEFKPITAGKVGMYVCGVTIYDLCHIGHGRTFVSFDVVSRYLRYLGYDLTFVRNITDIDDKIIKRAAENGETCDSLTERLIGEMHADFDALNMKRPDVEPRATQYIQEIIELVERLIERGFAYVADNGDVMFEVNKFDEYGKLSKQDLDQLQAGARVDVETAKRCPLDFVLWKMSKPGEPTWESPWGPGRPGWHIECSAMNSSILGNHFDIHGGGSDLQFPHHENEIAQSCCAHDTQYVNTWMHSGMVMVDKEKMSKSLGNFFTIRDVLGHYDAETVRYFLMSGHYRSQLNYSEENLNQARASLERLYTSLRGLDFSAAPAGGEEYVSRFTAAMNDDFNTPEAYSVLFDMAREINRLKTEDLANASALGALMRELADVIGILHQDPEAFLKGDAGNDDEVAEIEALIKLRNDSRAAKDWANADMARDKLNEMGIVLEDGPDGTTWRRK.

Cys28 lines the Zn(2+) pocket. The 'HIGH' region signature appears at 30–40 (VTIYDLCHIGH). Zn(2+)-binding residues include Cys209, His234, and Glu238. A 'KMSKS' region motif is present at residues 266–270 (KMSKS). ATP is bound at residue Lys269.

This sequence belongs to the class-I aminoacyl-tRNA synthetase family. Monomer. Zn(2+) serves as cofactor.

The protein resides in the cytoplasm. It carries out the reaction tRNA(Cys) + L-cysteine + ATP = L-cysteinyl-tRNA(Cys) + AMP + diphosphate. The polypeptide is Cysteine--tRNA ligase (Vibrio vulnificus (strain YJ016)).